A 261-amino-acid chain; its full sequence is Type III pantothenate kinase (261 aa).

6 to 13 (DVGNTNAK) is a binding site for ATP. Substrate is bound at residue 108–111 (GADR). Asp110 functions as the Proton acceptor in the catalytic mechanism. Thr134 provides a ligand contact to ATP. Thr188 is a substrate binding site.

The protein belongs to the type III pantothenate kinase family. As to quaternary structure, homodimer. The cofactor is NH4(+). K(+) serves as cofactor.

It is found in the cytoplasm. The catalysed reaction is (R)-pantothenate + ATP = (R)-4'-phosphopantothenate + ADP + H(+). It participates in cofactor biosynthesis; coenzyme A biosynthesis; CoA from (R)-pantothenate: step 1/5. Catalyzes the phosphorylation of pantothenate (Pan), the first step in CoA biosynthesis. The sequence is that of Type III pantothenate kinase from Sphingopyxis alaskensis (strain DSM 13593 / LMG 18877 / RB2256) (Sphingomonas alaskensis).